We begin with the raw amino-acid sequence, 211 residues long: MTSQKKAPIIIGVTGGSGSGKTTVSQAIAQKFANHSVMLLPQDAYYKHQDGSFEERQETNYDHPDAFDTDLLIEQATMLKNHQPIEQPVYDYKIHNRTDEVVHVEPQDVIILEGILVLADARLRDLMDIKVYVDTDDDIRLLRRMSRDMESRGRSFDDIVMQYLKTVKPMFHEFIEPTKRYADLIVPEGGNNRVAIDLLVTKIQSILNMND.

15 to 22 serves as a coordination point for ATP; it reads GGSGSGKT.

Belongs to the uridine kinase family.

It localises to the cytoplasm. It carries out the reaction uridine + ATP = UMP + ADP + H(+). The catalysed reaction is cytidine + ATP = CMP + ADP + H(+). It participates in pyrimidine metabolism; CTP biosynthesis via salvage pathway; CTP from cytidine: step 1/3. It functions in the pathway pyrimidine metabolism; UMP biosynthesis via salvage pathway; UMP from uridine: step 1/1. The sequence is that of Uridine kinase from Latilactobacillus sakei subsp. sakei (strain 23K) (Lactobacillus sakei subsp. sakei).